We begin with the raw amino-acid sequence, 307 residues long: Deaminated glutathione amidase (307 aa).

Residues 6–285 form the CN hydrolase domain; the sequence is KRVAVAQLCS…PQLILADLDR (280 aa). The active-site Proton acceptor is the glutamate 45. Lysine 127 acts as the Proton donor in catalysis. Residue cysteine 169 is the Nucleophile of the active site. 2 residues coordinate substrate: arginine 173 and threonine 199.

Belongs to the carbon-nitrogen hydrolase superfamily. NIT1/NIT2 family. As to quaternary structure, homodimer.

It is found in the cytoplasm. It localises to the mitochondrion. The catalysed reaction is N-(4-oxoglutaryl)-L-cysteinylglycine + H2O = L-cysteinylglycine + 2-oxoglutarate. The enzyme catalyses N-(4-carboxy-4-oxobutanoyl)-L-ethylglycylglycine + H2O = N-(2-aminobutanoyl)glycine + 2-oxoglutarate. In terms of biological role, catalyzes the hydrolysis of the amide bond in N-(4-oxoglutarate)-L-cysteinylglycine (deaminated glutathione), a metabolite repair reaction to dispose of the harmful deaminated glutathione. Possesses amidase activity toward deaminated ophthalmate in vitro. This chain is Deaminated glutathione amidase (NIT2), found in Saccharomyces cerevisiae (strain ATCC 204508 / S288c) (Baker's yeast).